A 1084-amino-acid polypeptide reads, in one-letter code: AP-3 complex subunit beta-1 (1084 aa).

Over residues 1–11 (MSSNSFAYNEQ) the composition is skewed to polar residues. Positions 1–26 (MSSNSFAYNEQSGGGEATELGQEATS) are disordered. Phosphoserine is present on residues S276 and S609. Residues 663–800 (AGKAKKENPD…KEKKTKQERN (138 aa)) are disordered. The segment covering 666–677 (AKKENPDKKFYS) has biased composition (basic and acidic residues). Residues 678-717 (ESEEEEDSSESSSDSESESGSESGEDEEDDRSGDSAEDSG) show a composition bias toward acidic residues. Positions 718–729 (ESGSEPEAGKGR) are enriched in low complexity. Residues 738–753 (GRGDSKDVDKEKENSK) show a composition bias toward basic and acidic residues. Phosphoserine is present on S742. A compositionally biased stretch (low complexity) spans 754-767 (TSESSSGESSSIEE). The span at 768-781 (SSSDSESESESESE) shows a compositional bias: acidic residues. Over residues 782–800 (SESRKVTKEKEKKTKQERN) the composition is skewed to basic and acidic residues.

Belongs to the adaptor complexes large subunit family. In terms of assembly, adaptor protein complex 3 (AP-3) is a heterotetramer composed of two large adaptins (delta-type subunit AP3D1 and beta-type subunit AP3B1 or AP3B2), a medium adaptin (mu-type subunit AP3M1 or AP3M2) and a small adaptin (sigma-type subunit APS1 or AP3S2). AP-3 associates with the BLOC-1 complex. Interacts with KIF3A; interaction is direct; interaction is impaired by pyrophosphorylation of AP3B1. Phosphorylated on serine residues. In terms of processing, pyrophosphorylation by 5-diphosphoinositol pentakisphosphate (5-IP7) impairs interaction with KIF3A. Serine pyrophosphorylation is achieved by Mg(2+)-dependent, but enzyme independent transfer of a beta-phosphate from a inositol pyrophosphate to a pre-phosphorylated serine residue.

Its subcellular location is the cytoplasmic vesicle. It is found in the clathrin-coated vesicle membrane. The protein localises to the golgi apparatus. Its function is as follows. Subunit of non-clathrin- and clathrin-associated adaptor protein complex 3 (AP-3) that plays a role in protein sorting in the late-Golgi/trans-Golgi network (TGN) and/or endosomes. The AP complexes mediate both the recruitment of clathrin to membranes and the recognition of sorting signals within the cytosolic tails of transmembrane cargo molecules. AP-3 appears to be involved in the sorting of a subset of transmembrane proteins targeted to lysosomes and lysosome-related organelles. In concert with the BLOC-1 complex, AP-3 is required to target cargos into vesicles assembled at cell bodies for delivery into neurites and nerve terminals. The chain is AP-3 complex subunit beta-1 (AP3B1) from Bos taurus (Bovine).